A 1012-amino-acid chain; its full sequence is DNA polymerase catalytic subunit (1012 aa).

This sequence belongs to the DNA polymerase type-B family.

It is found in the host nucleus. It carries out the reaction DNA(n) + a 2'-deoxyribonucleoside 5'-triphosphate = DNA(n+1) + diphosphate. This is DNA polymerase catalytic subunit (U38) from Homo sapiens (Human).